The primary structure comprises 383 residues: Putative type I specificity subunit S.MgeORF438P (383 aa).

A TRD1 region spans residues 1 to 142; that stretch reads MTPKLKLNNN…KELEIPFTSN (142 aa). The interval 143-182 is conserved region 1; the sequence is KNEQHAIANTLSVFDERLENLASLIEINRKLRDEYAHKLF. Residues 143-182 are a coiled coil; it reads KNEQHAIANTLSVFDERLENLASLIEINRKLRDEYAHKLF. Residues 183-330 form a TRD2 region; sequence SLDEAFLSHW…GEIKVPYVKS (148 aa). Residues 331–370 are conserved region 2; that stretch reads FQLQRKAGKIVFLLDQKLDQYKKELSSLTVIRDTLLKKLF. Positions 331–370 form a coiled coil; that stretch reads FQLQRKAGKIVFLLDQKLDQYKKELSSLTVIRDTLLKKLF.

This sequence belongs to the type-I restriction system S methylase family.

In terms of biological role, the specificity (S) subunit of a type I restriction enzyme; this subunit dictates DNA sequence specificity. This bacterium does not encode the associated endonuclease or methylase subunits. The chain is Putative type I specificity subunit S.MgeORF438P from Mycoplasma genitalium (strain ATCC 33530 / DSM 19775 / NCTC 10195 / G37) (Mycoplasmoides genitalium).